Here is a 255-residue protein sequence, read N- to C-terminus: MRVDLNSDLGESFGRYKLGLDEEVMRYITSANIACGWHAGDPIVMRRTVKLAKENNVQVGAHPGYPDLMGFGRRYMKLTPEEARNYILYQIGALYAFAKAEGVELQHVKPHGALYNAMVKEEELARAVIEGILDFDKNLILVTLSNSRVAEIAEEMGLKVAHEVFADRAYNPDGTLVPRGKPGAVIEDKEEIAERVISMVKDGGVRAINGEWVELRVDTICVHGDNPKALEITSHIRKILEEEGVKVVPLKDFIG.

It belongs to the LamB/PxpA family. As to quaternary structure, forms a complex composed of PxpA, PxpB and PxpC.

The catalysed reaction is 5-oxo-L-proline + ATP + 2 H2O = L-glutamate + ADP + phosphate + H(+). Its function is as follows. Catalyzes the cleavage of 5-oxoproline to form L-glutamate coupled to the hydrolysis of ATP to ADP and inorganic phosphate. The protein is 5-oxoprolinase subunit A of Pyrococcus abyssi (strain GE5 / Orsay).